A 404-amino-acid chain; its full sequence is Argininosuccinate synthase (404 aa).

ATP-binding positions include 11 to 19 and Ala-38; that span reads AYSGGLDTS. 2 residues coordinate L-citrulline: Tyr-91 and Ser-96. Gly-121 contacts ATP. 3 residues coordinate L-aspartate: Thr-123, Asn-127, and Asp-128. Asn-127 serves as a coordination point for L-citrulline. L-citrulline-binding residues include Arg-131, Ser-182, Ser-191, Glu-267, and Tyr-279.

This sequence belongs to the argininosuccinate synthase family. Type 1 subfamily. In terms of assembly, homotetramer.

The protein resides in the cytoplasm. The enzyme catalyses L-citrulline + L-aspartate + ATP = 2-(N(omega)-L-arginino)succinate + AMP + diphosphate + H(+). It functions in the pathway amino-acid biosynthesis; L-arginine biosynthesis; L-arginine from L-ornithine and carbamoyl phosphate: step 2/3. This is Argininosuccinate synthase from Paramagnetospirillum magneticum (strain ATCC 700264 / AMB-1) (Magnetospirillum magneticum).